The sequence spans 293 residues: Protease HtpX (293 aa).

Transmembrane regions (helical) follow at residues 4–24 (IALF…VLSL) and 34–54 (GLMI…LLMS). A Zn(2+)-binding site is contributed by His-139. Glu-140 is a catalytic residue. Zn(2+) is bound at residue His-143. The next 2 membrane-spanning stretches (helical) occupy residues 158–178 (IVNT…SGFL) and 193–213 (MVYF…ASII). Residue Glu-222 coordinates Zn(2+).

This sequence belongs to the peptidase M48B family. Zn(2+) is required as a cofactor.

The protein resides in the cell inner membrane. The protein is Protease HtpX of Pectobacterium atrosepticum (strain SCRI 1043 / ATCC BAA-672) (Erwinia carotovora subsp. atroseptica).